Consider the following 182-residue polypeptide: Putative colanic acid biosynthesis acetyltransferase WcaF (182 aa).

The protein belongs to the transferase hexapeptide repeat family.

Its pathway is slime biogenesis; slime polysaccharide biosynthesis. The protein is Putative colanic acid biosynthesis acetyltransferase WcaF (wcaF) of Shigella flexneri.